A 269-amino-acid polypeptide reads, in one-letter code: MGNWHEWAELLERVRGTKPLVHNITNVVVTNFTANGLLALGASPVMAYAKEEVAEMAKLAGALVLNIGTLNATEVEAMLIAGRAANEAGVPVIFDPVGAGATSYRTETAHRIAEQIQLAVVRGNAAEIANMIGESWMIKGVDAGEGSGDVVALAKRAAAKLGTVVAITGKEDVVTDGQAAYLIHNGHPLLTKVTGAGCLLTSVVGAFAAVEQDAVKAAVAALTYYGVAAEQAAAEAGQRGPGSFQVAFLDALARIGVDDVKREGRVEQR.

M46 is a substrate binding site. Positions 122 and 168 each coordinate ATP. Residue G195 participates in substrate binding.

Belongs to the Thz kinase family. The cofactor is Mg(2+).

The catalysed reaction is 5-(2-hydroxyethyl)-4-methylthiazole + ATP = 4-methyl-5-(2-phosphooxyethyl)-thiazole + ADP + H(+). It participates in cofactor biosynthesis; thiamine diphosphate biosynthesis; 4-methyl-5-(2-phosphoethyl)-thiazole from 5-(2-hydroxyethyl)-4-methylthiazole: step 1/1. Functionally, catalyzes the phosphorylation of the hydroxyl group of 4-methyl-5-beta-hydroxyethylthiazole (THZ). This is Hydroxyethylthiazole kinase from Geobacillus thermodenitrificans (strain NG80-2).